The following is a 205-amino-acid chain: Probable GTP-binding protein EngB (205 aa).

An EngB-type G domain is found at 22–195 (NLPEVALVGR…LDLLDYFWNG (174 aa)). GTP-binding positions include 30-37 (GRSNVGKS), 57-61 (GKTQT), 75-78 (DLPG), 142-145 (TKAD), and 174-176 (FSA). Residues Ser-37 and Thr-59 each coordinate Mg(2+).

The protein belongs to the TRAFAC class TrmE-Era-EngA-EngB-Septin-like GTPase superfamily. EngB GTPase family. Mg(2+) serves as cofactor.

Necessary for normal cell division and for the maintenance of normal septation. The polypeptide is Probable GTP-binding protein EngB (Heliobacterium modesticaldum (strain ATCC 51547 / Ice1)).